Consider the following 874-residue polypeptide: Alanine--tRNA ligase (874 aa).

Residues histidine 563, histidine 567, cysteine 664, and histidine 668 each contribute to the Zn(2+) site.

This sequence belongs to the class-II aminoacyl-tRNA synthetase family. Zn(2+) serves as cofactor.

Its subcellular location is the cytoplasm. It carries out the reaction tRNA(Ala) + L-alanine + ATP = L-alanyl-tRNA(Ala) + AMP + diphosphate. Functionally, catalyzes the attachment of alanine to tRNA(Ala) in a two-step reaction: alanine is first activated by ATP to form Ala-AMP and then transferred to the acceptor end of tRNA(Ala). Also edits incorrectly charged Ser-tRNA(Ala) and Gly-tRNA(Ala) via its editing domain. In Methylobacillus flagellatus (strain ATCC 51484 / DSM 6875 / VKM B-1610 / KT), this protein is Alanine--tRNA ligase.